The chain runs to 296 residues: MNDAISLQFKVISGLYCELTGTTALETSLIGSGLDADIVFVEQGLAPHHFRVTLLGKTLEVEALAAGLSIEGNGNIAAGERVVAPLPVVIHAGAMSILWSVQDAASSGSIGKPRLSISVLALVLLGSLGIGVLSAIFSYYDNAVVSNADLSGEAREPKLPDNRTDDETAFTAAKALQQEVDRAGLSNIKISAAEGVVTVEGTVTSASAISWHKVQQWFDHRTRGALALLNGVIIDDEKAPSAIAVEAVWRGSLPYLVIKGEKYFVGALLDDGWMVERIEDGRVMLSRNGRLAAVPY.

The next 2 helical transmembrane spans lie at 82–102 (VVAPLPVVIHAGAMSILWSVQ) and 117–137 (ISVLALVLLGSLGIGVLSAIF).

The protein localises to the cell membrane. This is an uncharacterized protein from Sinorhizobium fredii (strain NBRC 101917 / NGR234).